The chain runs to 273 residues: 5-deoxy-glucuronate isomerase (273 aa).

The protein belongs to the isomerase IolB family.

It carries out the reaction 5-deoxy-D-glucuronate = 5-dehydro-2-deoxy-D-gluconate. The protein operates within polyol metabolism; myo-inositol degradation into acetyl-CoA; acetyl-CoA from myo-inositol: step 4/7. Its function is as follows. Involved in the isomerization of 5-deoxy-glucuronate (5DG) to 5-dehydro-2-deoxy-D-gluconate (DKG or 2-deoxy-5-keto-D-gluconate). In Listeria innocua serovar 6a (strain ATCC BAA-680 / CLIP 11262), this protein is 5-deoxy-glucuronate isomerase.